The sequence spans 680 residues: DNA ligase (680 aa).

NAD(+)-binding positions include 44 to 48, 93 to 94, and glutamate 125; these read DHVYD and SM. The active-site N6-AMP-lysine intermediate is lysine 127. Positions 148, 182, 298, and 322 each coordinate NAD(+). Residues cysteine 416, cysteine 419, cysteine 434, and cysteine 439 each contribute to the Zn(2+) site. Residues 600 to 680 form the BRCT domain; that stretch reads NPDSEWNGRR…QFSQAMKEEQ (81 aa).

Belongs to the NAD-dependent DNA ligase family. LigA subfamily. It depends on Mg(2+) as a cofactor. Mn(2+) serves as cofactor.

It catalyses the reaction NAD(+) + (deoxyribonucleotide)n-3'-hydroxyl + 5'-phospho-(deoxyribonucleotide)m = (deoxyribonucleotide)n+m + AMP + beta-nicotinamide D-nucleotide.. Functionally, DNA ligase that catalyzes the formation of phosphodiester linkages between 5'-phosphoryl and 3'-hydroxyl groups in double-stranded DNA using NAD as a coenzyme and as the energy source for the reaction. It is essential for DNA replication and repair of damaged DNA. This is DNA ligase from Limosilactobacillus reuteri (strain DSM 20016) (Lactobacillus reuteri).